We begin with the raw amino-acid sequence, 141 residues long: Ly6/PLAUR domain-containing protein 1 (141 aa).

Residues 1–20 form the signal peptide; that stretch reads MWVLGIAATFCGLFLLPGFA. Intrachain disulfides connect Cys25/Cys54, Cys28/Cys37, Cys46/Cys71, Cys77/Cys100, Cys88/Cys97, and Cys101/Cys106. Residues 25-107 enclose the UPAR/Ly6 domain; it reads CYQCEEFQLN…ISCCNTPLCN (83 aa). An N-linked (GlcNAc...) asparagine glycan is attached at Asn45. The GPI-anchor amidated serine moiety is linked to residue Ser117. A propeptide spans 118–141 (removed in mature form); sequence ASALRPGLRTTILFLKLALFSAHC.

In terms of assembly, interacts with CHRNA4 and nAChRs containing alpha-4:beta-2 (CHRNA4:CHRNB2) and alpha-7 (CHRNA7) subunits.

It is found in the cell membrane. In terms of biological role, believed to act as a modulator of nicotinic acetylcholine receptors (nAChRs) activity. In vitro increases receptor desensitization and decreases affinity for ACh of alpha-4:beta-2-containing nAChRs. May play a role in the intracellular trafficking of alpha-4:beta-2 and alpha-7-containing nAChRs and may inhibit their expression at the cell surface. May be involved in the control of anxiety. This Homo sapiens (Human) protein is Ly6/PLAUR domain-containing protein 1 (LYPD1).